A 174-amino-acid chain; its full sequence is Large ribosomal subunit protein uL18 (174 aa).

The protein belongs to the universal ribosomal protein uL18 family. As to quaternary structure, part of the 50S ribosomal subunit. Contacts the 5S and 23S rRNAs.

Functionally, this is one of the proteins that bind and probably mediate the attachment of the 5S RNA into the large ribosomal subunit, where it forms part of the central protuberance. This is Large ribosomal subunit protein uL18 from Methanoregula boonei (strain DSM 21154 / JCM 14090 / 6A8).